The chain runs to 229 residues: Large ribosomal subunit protein uL1 (229 aa).

It belongs to the universal ribosomal protein uL1 family. In terms of assembly, part of the 50S ribosomal subunit.

In terms of biological role, binds directly to 23S rRNA. The L1 stalk is quite mobile in the ribosome, and is involved in E site tRNA release. Protein L1 is also a translational repressor protein, it controls the translation of the L11 operon by binding to its mRNA. This chain is Large ribosomal subunit protein uL1, found in Clostridium tetani (strain Massachusetts / E88).